Reading from the N-terminus, the 220-residue chain is MQINKYIDHTILKADAPKSKVQQIIDEAKKYDFMSVCINPTWVNYASQELKDSDVKVCTVIGFPLGANTSELKAFEAKNAIENGADEIDMVINIGAAKSKDWDLVESDIADVNAVKGDKLLKVIIETSLLTDEEKIKACQIAKAVGADFVKTSTGFSTGGAAVHDVKLMRQTVGPDMGVKASGGVHNLEEAKAMIDAGATRLGVSAGVAIMEGLTSNDSY.

The active-site Proton donor/acceptor is the Asp89. The active-site Schiff-base intermediate with acetaldehyde is the Lys151. Lys180 (proton donor/acceptor) is an active-site residue.

It belongs to the DeoC/FbaB aldolase family. DeoC type 1 subfamily.

It localises to the cytoplasm. The catalysed reaction is 2-deoxy-D-ribose 5-phosphate = D-glyceraldehyde 3-phosphate + acetaldehyde. It participates in carbohydrate degradation; 2-deoxy-D-ribose 1-phosphate degradation; D-glyceraldehyde 3-phosphate and acetaldehyde from 2-deoxy-alpha-D-ribose 1-phosphate: step 2/2. Its function is as follows. Catalyzes a reversible aldol reaction between acetaldehyde and D-glyceraldehyde 3-phosphate to generate 2-deoxy-D-ribose 5-phosphate. The polypeptide is Deoxyribose-phosphate aldolase (Lactococcus lactis subsp. cremoris (strain SK11)).